We begin with the raw amino-acid sequence, 275 residues long: Translation initiation factor 2 subunit alpha (275 aa).

Residues 12–83 enclose the S1 motif domain; the sequence is GEFVVATVKR…RKGHIDLSLR (72 aa).

The protein belongs to the eIF-2-alpha family. As to quaternary structure, heterotrimer composed of an alpha, a beta and a gamma chain.

Functionally, eIF-2 functions in the early steps of protein synthesis by forming a ternary complex with GTP and initiator tRNA. The polypeptide is Translation initiation factor 2 subunit alpha (eif2a) (Pyrococcus horikoshii (strain ATCC 700860 / DSM 12428 / JCM 9974 / NBRC 100139 / OT-3)).